Consider the following 229-residue polypeptide: 2-C-methyl-D-erythritol 4-phosphate cytidylyltransferase (229 aa).

The protein belongs to the IspD/TarI cytidylyltransferase family. IspD subfamily.

The enzyme catalyses 2-C-methyl-D-erythritol 4-phosphate + CTP + H(+) = 4-CDP-2-C-methyl-D-erythritol + diphosphate. The protein operates within isoprenoid biosynthesis; isopentenyl diphosphate biosynthesis via DXP pathway; isopentenyl diphosphate from 1-deoxy-D-xylulose 5-phosphate: step 2/6. Its function is as follows. Catalyzes the formation of 4-diphosphocytidyl-2-C-methyl-D-erythritol from CTP and 2-C-methyl-D-erythritol 4-phosphate (MEP). In Neisseria meningitidis serogroup C (strain 053442), this protein is 2-C-methyl-D-erythritol 4-phosphate cytidylyltransferase.